Consider the following 334-residue polypeptide: Beta-hexosaminidase (334 aa).

Substrate is bound by residues aspartate 62, arginine 70, arginine 130, and 160-161 (KH). The active-site Proton donor/acceptor is histidine 173. Aspartate 243 functions as the Nucleophile in the catalytic mechanism.

The protein belongs to the glycosyl hydrolase 3 family. NagZ subfamily.

The protein resides in the cytoplasm. It catalyses the reaction Hydrolysis of terminal non-reducing N-acetyl-D-hexosamine residues in N-acetyl-beta-D-hexosaminides.. Its pathway is cell wall biogenesis; peptidoglycan recycling. In terms of biological role, plays a role in peptidoglycan recycling by cleaving the terminal beta-1,4-linked N-acetylglucosamine (GlcNAc) from peptide-linked peptidoglycan fragments, giving rise to free GlcNAc, anhydro-N-acetylmuramic acid and anhydro-N-acetylmuramic acid-linked peptides. This is Beta-hexosaminidase from Photobacterium profundum (strain SS9).